Consider the following 148-residue polypeptide: Small ribosomal subunit protein eS19G (148 aa).

It belongs to the eukaryotic ribosomal protein eS19 family.

Functionally, elimination of the ALEP-1 gene from all somatic cells in its fully activate state may represent an alternative way to gene regulation. This Ascaris suum (Pig roundworm) protein is Small ribosomal subunit protein eS19G (RPS19G).